Reading from the N-terminus, the 285-residue chain is Eukaryotic translation initiation factor 2 subunit beta (285 aa).

The interval aspartate 30–threonine 69 is disordered. Serine 40 bears the Phosphoserine mark. The residue at position 69 (threonine 69) is a Phosphothreonine. Serine 80, serine 92, and serine 112 each carry phosphoserine. Position 116 is a phosphothreonine (threonine 116). Serine 118 is modified (phosphoserine). A C4-type zinc finger spans residues cysteine 236 to cysteine 262.

This sequence belongs to the eIF-2-beta/eIF-5 family. As to quaternary structure, eukaryotic translation initiation factor 2 eIF2 is a heterotrimeric complex composed of an alpha, a beta and a gamma subunit. The factors eIF-1, eIF-2, eIF-3, TIF5/eIF-5 and methionyl-tRNAi form a multifactor complex (MFC) that may bind to the 40S ribosome. Interacts with GCD6. Interacts with GCD1. Interacts with TIF5/eIF-5. Interacts with CDC123.

The protein resides in the cytoplasm. It localises to the cytosol. Functionally, component of the eIF2 complex that functions in the early steps of protein synthesis by forming a ternary complex with GTP and initiator tRNA. This complex binds to a 40S ribosomal subunit, followed by mRNA binding to form a 43S pre-initiation complex (43S PIC). Junction of the 60S ribosomal subunit to form the 80S initiation complex is preceded by hydrolysis of the GTP bound to eIF2 and release of an eIF2-GDP binary complex. In order for eIF2 to recycle and catalyze another round of initiation, the GDP bound to eIF2 must exchange with GTP by way of a reaction catalyzed by eIF2B. The chain is Eukaryotic translation initiation factor 2 subunit beta (SUI3) from Saccharomyces cerevisiae (strain ATCC 204508 / S288c) (Baker's yeast).